Here is a 279-residue protein sequence, read N- to C-terminus: Putative pyruvate, phosphate dikinase regulatory protein (279 aa).

152–159 (GVSRTSKS) is an ADP binding site.

The protein belongs to the pyruvate, phosphate/water dikinase regulatory protein family. PDRP subfamily.

The catalysed reaction is N(tele)-phospho-L-histidyl/L-threonyl-[pyruvate, phosphate dikinase] + ADP = N(tele)-phospho-L-histidyl/O-phospho-L-threonyl-[pyruvate, phosphate dikinase] + AMP + H(+). It carries out the reaction N(tele)-phospho-L-histidyl/O-phospho-L-threonyl-[pyruvate, phosphate dikinase] + phosphate + H(+) = N(tele)-phospho-L-histidyl/L-threonyl-[pyruvate, phosphate dikinase] + diphosphate. Its function is as follows. Bifunctional serine/threonine kinase and phosphorylase involved in the regulation of the pyruvate, phosphate dikinase (PPDK) by catalyzing its phosphorylation/dephosphorylation. The protein is Putative pyruvate, phosphate dikinase regulatory protein of Anaplasma marginale (strain St. Maries).